Here is a 101-residue protein sequence, read N- to C-terminus: Urease subunit beta (101 aa).

This sequence belongs to the urease beta subunit family. Heterotrimer of UreA (gamma), UreB (beta) and UreC (alpha) subunits. Three heterotrimers associate to form the active enzyme.

The protein localises to the cytoplasm. The enzyme catalyses urea + 2 H2O + H(+) = hydrogencarbonate + 2 NH4(+). The protein operates within nitrogen metabolism; urea degradation; CO(2) and NH(3) from urea (urease route): step 1/1. In Burkholderia mallei (strain NCTC 10247), this protein is Urease subunit beta.